The sequence spans 176 residues: Large ribosomal subunit protein uL22z (176 aa).

Basic and acidic residues predominate over residues 154-163 (KEEPVKKEPE). Residues 154–176 (KEEPVKKEPETQLAAKSKKGASS) form a disordered region.

The protein belongs to the universal ribosomal protein uL22 family.

This is Large ribosomal subunit protein uL22z (RPL17A) from Arabidopsis thaliana (Mouse-ear cress).